Consider the following 158-residue polypeptide: SsrA-binding protein (158 aa).

Over residues 136–151 the composition is skewed to basic and acidic residues; that stretch reads KRADSKSRDWARDKQR. The disordered stretch occupies residues 136–158; that stretch reads KRADSKSRDWARDKQRIMKHSTR.

It belongs to the SmpB family.

Its subcellular location is the cytoplasm. Required for rescue of stalled ribosomes mediated by trans-translation. Binds to transfer-messenger RNA (tmRNA), required for stable association of tmRNA with ribosomes. tmRNA and SmpB together mimic tRNA shape, replacing the anticodon stem-loop with SmpB. tmRNA is encoded by the ssrA gene; the 2 termini fold to resemble tRNA(Ala) and it encodes a 'tag peptide', a short internal open reading frame. During trans-translation Ala-aminoacylated tmRNA acts like a tRNA, entering the A-site of stalled ribosomes, displacing the stalled mRNA. The ribosome then switches to translate the ORF on the tmRNA; the nascent peptide is terminated with the 'tag peptide' encoded by the tmRNA and targeted for degradation. The ribosome is freed to recommence translation, which seems to be the essential function of trans-translation. This chain is SsrA-binding protein, found in Photobacterium profundum (strain SS9).